Consider the following 90-residue polypeptide: DNA-directed RNA polymerase subunit omega (90 aa).

It belongs to the RNA polymerase subunit omega family. In terms of assembly, the RNAP catalytic core consists of 2 alpha, 1 beta, 1 beta' and 1 omega subunit. When a sigma factor is associated with the core the holoenzyme is formed, which can initiate transcription.

It carries out the reaction RNA(n) + a ribonucleoside 5'-triphosphate = RNA(n+1) + diphosphate. Functionally, promotes RNA polymerase assembly. Latches the N- and C-terminal regions of the beta' subunit thereby facilitating its interaction with the beta and alpha subunits. The protein is DNA-directed RNA polymerase subunit omega of Hamiltonella defensa subsp. Acyrthosiphon pisum (strain 5AT).